The chain runs to 129 residues: Small ribosomal subunit protein uS11 (129 aa).

The protein belongs to the universal ribosomal protein uS11 family. In terms of assembly, part of the 30S ribosomal subunit. Interacts with proteins S7 and S18. Binds to IF-3.

Located on the platform of the 30S subunit, it bridges several disparate RNA helices of the 16S rRNA. Forms part of the Shine-Dalgarno cleft in the 70S ribosome. This Zymomonas mobilis subsp. mobilis (strain ATCC 31821 / ZM4 / CP4) protein is Small ribosomal subunit protein uS11.